We begin with the raw amino-acid sequence, 542 residues long: Chaperonin GroEL (542 aa).

ATP-binding positions include 29 to 32, 86 to 90, Gly413, 476 to 478, and Asp492; these read TLGP, DGTTT, and NAA. Residues 522-542 form a disordered region; sequence PDENGPAAVPDMGMGGMGGMM.

The protein belongs to the chaperonin (HSP60) family. In terms of assembly, forms a cylinder of 14 subunits composed of two heptameric rings stacked back-to-back. Interacts with the co-chaperonin GroES.

Its subcellular location is the cytoplasm. It catalyses the reaction ATP + H2O + a folded polypeptide = ADP + phosphate + an unfolded polypeptide.. Its function is as follows. Together with its co-chaperonin GroES, plays an essential role in assisting protein folding. The GroEL-GroES system forms a nano-cage that allows encapsulation of the non-native substrate proteins and provides a physical environment optimized to promote and accelerate protein folding. In Listeria monocytogenes serotype 4b (strain CLIP80459), this protein is Chaperonin GroEL.